Consider the following 174-residue polypeptide: MTTIVSVRRNNQVVIAGDGQVSLGNTVMKGNARKVRRLYHNKVLAGFAGGTADAFTLFERFESKLEMHQGHLMRAAVEMAKDWRSDRVLRKLEALLAVADTECSLIITGNGDVVQPENDLIAIGSGGNFAQAAATALLENTDLSAKEIAEKSLTIAGDICVFTNQFKTIEELNY.

The active site involves threonine 2. Residues glycine 157, cysteine 160, and threonine 163 each coordinate Na(+).

The protein belongs to the peptidase T1B family. HslV subfamily. A double ring-shaped homohexamer of HslV is capped on each side by a ring-shaped HslU homohexamer. The assembly of the HslU/HslV complex is dependent on binding of ATP.

It is found in the cytoplasm. The enzyme catalyses ATP-dependent cleavage of peptide bonds with broad specificity.. Allosterically activated by HslU binding. In terms of biological role, protease subunit of a proteasome-like degradation complex believed to be a general protein degrading machinery. This is ATP-dependent protease subunit HslV from Shewanella loihica (strain ATCC BAA-1088 / PV-4).